The primary structure comprises 218 residues: Nucleoid occlusion factor SlmA (218 aa).

The HTH tetR-type domain occupies 30 to 90 (ERRQQVLTVL…ALIEHIESTL (61 aa)). The H-T-H motif DNA-binding region spans 53–72 (TTARLAKEVGVSEAALYRYF).

It belongs to the nucleoid occlusion factor SlmA family. Homodimer. Interacts with FtsZ.

The protein localises to the cytoplasm. It localises to the nucleoid. In terms of biological role, required for nucleoid occlusion (NO) phenomenon, which prevents Z-ring formation and cell division over the nucleoid. Acts as a DNA-associated cell division inhibitor that binds simultaneously chromosomal DNA and FtsZ, and disrupts the assembly of FtsZ polymers. SlmA-DNA-binding sequences (SBS) are dispersed on non-Ter regions of the chromosome, preventing FtsZ polymerization at these regions. This chain is Nucleoid occlusion factor SlmA, found in Haemophilus influenzae (strain PittGG).